The following is a 338-amino-acid chain: D-erythrose-4-phosphate dehydrogenase (338 aa).

Residue 11–12 (RI) coordinates NAD(+). Residues 153 to 155 (SCT), R199, 212 to 213 (TK), and R235 each bind substrate. The Nucleophile role is filled by C154. N317 contacts NAD(+).

It belongs to the glyceraldehyde-3-phosphate dehydrogenase family. Epd subfamily. In terms of assembly, homotetramer.

The protein resides in the cytoplasm. The catalysed reaction is D-erythrose 4-phosphate + NAD(+) + H2O = 4-phospho-D-erythronate + NADH + 2 H(+). The protein operates within cofactor biosynthesis; pyridoxine 5'-phosphate biosynthesis; pyridoxine 5'-phosphate from D-erythrose 4-phosphate: step 1/5. Functionally, catalyzes the NAD-dependent conversion of D-erythrose 4-phosphate to 4-phosphoerythronate. This chain is D-erythrose-4-phosphate dehydrogenase, found in Shewanella loihica (strain ATCC BAA-1088 / PV-4).